Reading from the N-terminus, the 137-residue chain is Structural protein A137R (137 aa).

The protein belongs to the asfivirus A137R family. Interacts with host TBK1.

It is found in the virion. The protein resides in the host cytoplasm. Its function is as follows. Plays a role in the inhibition of the host innate immune response. Mechanistically, promotes the autophagy-mediated lysosomal degradation of host TBK1 and affects IRF3 nuclear translocation to block type I IFN production. The chain is Structural protein A137R from Ornithodoros (relapsing fever ticks).